A 211-amino-acid polypeptide reads, in one-letter code: Regulator of G-protein signaling 2 (211 aa).

Disordered regions lie at residues 14 to 33 (RPMD…REKM) and 49 to 68 (LQNS…KQQA). The necessary for membrane association stretch occupies residues 32 to 66 (KMKRTLLKDWKTRLSYFLQNSSTPGKPKTGKKSKQ). The necessary to inhibit protein synthesis stretch occupies residues 79 to 116 (LWSEAFDELLASKYGLAAFRAFLKSEFCEENIEFWLAC). Residues 83–199 (AFDELLASKY…LESEFYQDLC (117 aa)) enclose the RGS domain.

As to quaternary structure, interacts with GNAQ. Does not interact with GNAI1 and GNAI3. Interacts with EIF2B5. Interacts with PRKG1 (isoform alpha). Phosphorylated by protein kinase C. Phosphorylation by PRKG1 leads to activation of RGS2 activity. In terms of tissue distribution, expressed in acute myelogenous leukemia (AML) and in acute lymphoblastic leukemia (ALL).

Its subcellular location is the cell membrane. The protein localises to the cytoplasm. The protein resides in the nucleus. It is found in the nucleolus. It localises to the mitochondrion. Regulates G protein-coupled receptor signaling cascades. Inhibits signal transduction by increasing the GTPase activity of G protein alpha subunits, thereby driving them into their inactive GDP-bound form. It is involved in the negative regulation of the angiotensin-activated signaling pathway. Plays a role in the regulation of blood pressure in response to signaling via G protein-coupled receptors and GNAQ. Plays a role in regulating the constriction and relaxation of vascular smooth muscle. Binds EIF2B5 and blocks its activity, thereby inhibiting the translation of mRNA into protein. In Homo sapiens (Human), this protein is Regulator of G-protein signaling 2 (RGS2).